A 407-amino-acid chain; its full sequence is Bifunctional enzyme IspD/IspF (407 aa).

A 2-C-methyl-D-erythritol 4-phosphate cytidylyltransferase region spans residues 1-246 (MQPLAEATTI…RQDHVSFPDI (246 aa)). The tract at residues 247-407 (RTGNGYDVHS…TVIYPGEVPE (161 aa)) is 2-C-methyl-D-erythritol 2,4-cyclodiphosphate synthase. A divalent metal cation contacts are provided by aspartate 253 and histidine 255. 4-CDP-2-C-methyl-D-erythritol 2-phosphate is bound by residues 253 to 255 (DVH) and 279 to 280 (HS). Histidine 287 provides a ligand contact to a divalent metal cation. Residues 301-303 (DIG), 377-380 (TTNE), phenylalanine 384, and arginine 387 each bind 4-CDP-2-C-methyl-D-erythritol 2-phosphate.

This sequence in the N-terminal section; belongs to the IspD/TarI cytidylyltransferase family. IspD subfamily. In the C-terminal section; belongs to the IspF family. A divalent metal cation serves as cofactor.

It catalyses the reaction 2-C-methyl-D-erythritol 4-phosphate + CTP + H(+) = 4-CDP-2-C-methyl-D-erythritol + diphosphate. The enzyme catalyses 4-CDP-2-C-methyl-D-erythritol 2-phosphate = 2-C-methyl-D-erythritol 2,4-cyclic diphosphate + CMP. The protein operates within isoprenoid biosynthesis; isopentenyl diphosphate biosynthesis via DXP pathway; isopentenyl diphosphate from 1-deoxy-D-xylulose 5-phosphate: step 2/6. It participates in isoprenoid biosynthesis; isopentenyl diphosphate biosynthesis via DXP pathway; isopentenyl diphosphate from 1-deoxy-D-xylulose 5-phosphate: step 4/6. Functionally, bifunctional enzyme that catalyzes the formation of 4-diphosphocytidyl-2-C-methyl-D-erythritol from CTP and 2-C-methyl-D-erythritol 4-phosphate (MEP) (IspD), and catalyzes the conversion of 4-diphosphocytidyl-2-C-methyl-D-erythritol 2-phosphate (CDP-ME2P) to 2-C-methyl-D-erythritol 2,4-cyclodiphosphate (ME-CPP) with a corresponding release of cytidine 5-monophosphate (CMP) (IspF). The chain is Bifunctional enzyme IspD/IspF from Brucella anthropi (strain ATCC 49188 / DSM 6882 / CCUG 24695 / JCM 21032 / LMG 3331 / NBRC 15819 / NCTC 12168 / Alc 37) (Ochrobactrum anthropi).